The following is a 551-amino-acid chain: Rqc2 homolog RqcH (551 aa).

The interval 363-551 is required for fibronectin binding; the sequence is YQKLKEAVKY…SKKIASMKKS (189 aa).

This sequence belongs to the NEMF family. As to quaternary structure, associates with stalled 50S ribosomal subunits, binds to RqcP. Interacts with human fibronectin.

It localises to the cell surface. The protein localises to the cytoplasm. Key component of the ribosome quality control system (RQC), a ribosome-associated complex that mediates the extraction of incompletely synthesized nascent chains from stalled ribosomes and their subsequent degradation. RqcH recruits Ala-charged tRNA, and with RqcP directs the elongation of stalled nascent chains on 50S ribosomal subunits, leading to non-templated C-terminal alanine extensions (Ala tail). The Ala tail promotes nascent chain degradation. May add between 1 and at least 8 Ala residues. Binds to stalled 50S ribosomal subunits. Its function is as follows. Recombinant protein binds to immobilized human fibronectin; binding is saturable and competed by heparin. Recombinant protein inhibits binding of whole cells to fibronectin. The polypeptide is Rqc2 homolog RqcH (Streptococcus pneumoniae (strain ATCC BAA-255 / R6)).